Consider the following 473-residue polypeptide: Endoglucanase B (473 aa).

An N-terminal signal peptide occupies residues 1–17 (MKFLNTFSLLSLAIIGS). The segment at 18 to 367 (KAMKNISSKE…GLIKGLGNSI (350 aa)) is catalytic. Glutamate 173 serves as the catalytic Proton donor. Glutamate 295 serves as the catalytic Nucleophile. The linker stretch occupies residues 365–387 (NSIKTRTTIRRTTTTTTSQSQPT). CBM10 domains are found at residues 391–427 (SCFSVNLGYSCCNGCEVEYTDSDGEWGVENGNWCGIK) and 436–473 (ICWSEKLGYPCCQNTSSVVYTDNDGKWGVENGNWCGIY).

Belongs to the glycosyl hydrolase 5 (cellulase A) family.

The enzyme catalyses Endohydrolysis of (1-&gt;4)-beta-D-glucosidic linkages in cellulose, lichenin and cereal beta-D-glucans.. Rate of hydrolysis of cellulo-oligosaccharides increased with increasing chain length from cellotriose to cellopentaose. The protein is Endoglucanase B (CELB) of Neocallimastix patriciarum (Rumen fungus).